The primary structure comprises 359 residues: 3-dehydroquinate synthase (359 aa).

Residues aspartate 70–lysine 75, glycine 105–aspartate 109, threonine 129–threonine 130, lysine 142, lysine 151, and phenylalanine 169–threonine 172 each bind NAD(+). Glutamate 184, histidine 247, and histidine 264 together coordinate Zn(2+).

The protein belongs to the sugar phosphate cyclases superfamily. Dehydroquinate synthase family. Co(2+) serves as cofactor. Requires Zn(2+) as cofactor. The cofactor is NAD(+).

It localises to the cytoplasm. It catalyses the reaction 7-phospho-2-dehydro-3-deoxy-D-arabino-heptonate = 3-dehydroquinate + phosphate. It participates in metabolic intermediate biosynthesis; chorismate biosynthesis; chorismate from D-erythrose 4-phosphate and phosphoenolpyruvate: step 2/7. Catalyzes the conversion of 3-deoxy-D-arabino-heptulosonate 7-phosphate (DAHP) to dehydroquinate (DHQ). This is 3-dehydroquinate synthase from Francisella tularensis subsp. mediasiatica (strain FSC147).